The primary structure comprises 300 residues: MDPQYARWVKAAALSATALASILLIIKIFAWWHTGSVSLLAALVDSLVDLAASLTNLFVVRYSLQPADEEHTFGHGKAESLAALAQSMFISGSALFLFLTGFRHLASPEPLQDPSIGIGVTLVALFSTLILVTFQRWVVRKTHSQAIRADMLHYQSDVLMNGAILIALALSWYGFRRADALFALGIGVYILYSALRMGYEAVQSLLDRALPDDERQQIIDIVTSWPGVIGAHDLRTRRSGQTRFIQLHLEMEDMMPLMEAHVLAEQVEHALLYRFPGADVLIHQDPCSVVPKERHAHWEL.

Transmembrane regions (helical) follow at residues 12–32, 40–60, 82–102, and 114–134; these read AALSATALASILLIIKIFAWW, LAALVDSLVDLAASLTNLFVV, AALAQSMFISGSALFLFLTGF, and PSIGIGVTLVALFSTLILVTF. Zn(2+) is bound by residues Asp-45 and Asp-49. Zn(2+) contacts are provided by His-153 and Asp-157. Helical transmembrane passes span 155 to 175 and 178 to 198; these read QSDVLMNGAILIALALSWYGF and ADALFALGIGVYILYSALRMG.

It belongs to the cation diffusion facilitator (CDF) transporter (TC 2.A.4) family. FieF subfamily. Homodimer.

The protein localises to the cell inner membrane. It catalyses the reaction Zn(2+)(in) + H(+)(out) = Zn(2+)(out) + H(+)(in). It carries out the reaction Cd(2+)(in) + H(+)(out) = Cd(2+)(out) + H(+)(in). The enzyme catalyses Fe(2+)(in) + H(+)(out) = Fe(2+)(out) + H(+)(in). Functionally, divalent metal cation transporter which exports Zn(2+), Cd(2+) and possibly Fe(2+). May be involved in zinc and iron detoxification by efflux. This Yersinia pestis bv. Antiqua (strain Antiqua) protein is Cation-efflux pump FieF.